The primary structure comprises 151 residues: Guanylate kinase homolog (151 aa).

Positions 1-141 (MEREGVDYHY…AYSKLIQILQ (141 aa)) constitute a Guanylate kinase-like domain.

It belongs to the guanylate kinase family.

The protein is Guanylate kinase homolog of Bos taurus (Bovine).